The primary structure comprises 98 residues: MTTMFLNLLLAFTVALVGVFIYREHLMSTLLCLEGMMLSIFIMVALILLHHHLNSTMMLPLILLVFSACEAGVGLALLVKTSNSYGTDHINNLNLLQC.

3 helical membrane-spanning segments follow: residues 1–21, 29–49, and 59–79; these read MTTMFLNLLLAFTVALVGVFI, TLLCLEGMMLSIFIMVALILL, and LPLILLVFSACEAGVGLALLV.

Belongs to the complex I subunit 4L family. In terms of assembly, core subunit of respiratory chain NADH dehydrogenase (Complex I) which is composed of 45 different subunits.

It localises to the mitochondrion inner membrane. The catalysed reaction is a ubiquinone + NADH + 5 H(+)(in) = a ubiquinol + NAD(+) + 4 H(+)(out). Core subunit of the mitochondrial membrane respiratory chain NADH dehydrogenase (Complex I) which catalyzes electron transfer from NADH through the respiratory chain, using ubiquinone as an electron acceptor. Part of the enzyme membrane arm which is embedded in the lipid bilayer and involved in proton translocation. This chain is NADH-ubiquinone oxidoreductase chain 4L (MT-ND4L), found in Ornithorhynchus anatinus (Duckbill platypus).